The following is an 82-amino-acid chain: MLKIRLTRIGAPKKPCYRIIVTEARSPRDATYTDLVGTYNPMTNPETVVINAEKALYWIGKGAQPTDTVARLLKKAGVVNSN.

The protein belongs to the bacterial ribosomal protein bS16 family.

The polypeptide is Small ribosomal subunit protein bS16 (Dehalococcoides mccartyi (strain ATCC BAA-2266 / KCTC 15142 / 195) (Dehalococcoides ethenogenes (strain 195))).